The chain runs to 334 residues: Adenosine deaminase (334 aa).

Zn(2+) contacts are provided by H12 and H14. Residues H14, D16, and G170 each contribute to the substrate site. H197 provides a ligand contact to Zn(2+). E200 functions as the Proton donor in the catalytic mechanism. D278 is a Zn(2+) binding site. Substrate is bound at residue D279.

It belongs to the metallo-dependent hydrolases superfamily. Adenosine and AMP deaminases family. Adenosine deaminase subfamily. Requires Zn(2+) as cofactor.

It catalyses the reaction adenosine + H2O + H(+) = inosine + NH4(+). The enzyme catalyses 2'-deoxyadenosine + H2O + H(+) = 2'-deoxyinosine + NH4(+). Catalyzes the hydrolytic deamination of adenosine and 2-deoxyadenosine. This Vibrio cholerae serotype O1 (strain ATCC 39541 / Classical Ogawa 395 / O395) protein is Adenosine deaminase.